Reading from the N-terminus, the 364-residue chain is UDP-N-acetylglucosamine--N-acetylmuramyl-(pentapeptide) pyrophosphoryl-undecaprenol N-acetylglucosamine transferase (364 aa).

UDP-N-acetyl-alpha-D-glucosamine-binding positions include 13–15, Asn-125, Arg-165, Ser-192, and Gln-293; that span reads TGG.

The protein belongs to the glycosyltransferase 28 family. MurG subfamily.

The protein localises to the cell inner membrane. The enzyme catalyses di-trans,octa-cis-undecaprenyl diphospho-N-acetyl-alpha-D-muramoyl-L-alanyl-D-glutamyl-meso-2,6-diaminopimeloyl-D-alanyl-D-alanine + UDP-N-acetyl-alpha-D-glucosamine = di-trans,octa-cis-undecaprenyl diphospho-[N-acetyl-alpha-D-glucosaminyl-(1-&gt;4)]-N-acetyl-alpha-D-muramoyl-L-alanyl-D-glutamyl-meso-2,6-diaminopimeloyl-D-alanyl-D-alanine + UDP + H(+). It participates in cell wall biogenesis; peptidoglycan biosynthesis. Functionally, cell wall formation. Catalyzes the transfer of a GlcNAc subunit on undecaprenyl-pyrophosphoryl-MurNAc-pentapeptide (lipid intermediate I) to form undecaprenyl-pyrophosphoryl-MurNAc-(pentapeptide)GlcNAc (lipid intermediate II). This is UDP-N-acetylglucosamine--N-acetylmuramyl-(pentapeptide) pyrophosphoryl-undecaprenol N-acetylglucosamine transferase from Cereibacter sphaeroides (strain ATCC 17025 / ATH 2.4.3) (Rhodobacter sphaeroides).